A 130-amino-acid polypeptide reads, in one-letter code: Anti-adapter protein IraD (130 aa).

This sequence belongs to the GpW/Gp25 family. IraD subfamily. Interacts with RssB.

It localises to the cytoplasm. Inhibits RpoS proteolysis by regulating RssB activity, thereby increasing the stability of the sigma stress factor RpoS during oxidative stress. Its effect on RpoS stability is due to its interaction with RssB, which probably blocks the interaction of RssB with RpoS, and the consequent delivery of the RssB-RpoS complex to the ClpXP protein degradation pathway. In Escherichia coli O7:K1 (strain IAI39 / ExPEC), this protein is Anti-adapter protein IraD.